The sequence spans 451 residues: BSD domain-containing protein 1 (451 aa).

The 53-residue stretch at 146-198 (WLSRFSLEEKKGEIAELLATSPSIRALYTKMVPAAVSHSEFWQRYFYKVHRLE) folds into the BSD domain. Disordered regions lie at residues 252 to 296 (SAAL…SLVT) and 309 to 424 (LQTG…DLDM). The span at 275 to 295 (PPELAPAEGSPSESSESVSLV) shows a compositional bias: low complexity. Over residues 309 to 320 (LQTGVQPSGNRD) the composition is skewed to polar residues. The segment covering 365-388 (KEVESKAQGRTETLKEEGPTDLRV) has biased composition (basic and acidic residues). Over residues 392 to 411 (NSDSGKSTPSNNGKKGSSTD) the composition is skewed to polar residues. Residues 412-424 (ISEDWEKDFDLDM) are compositionally biased toward acidic residues.

The chain is BSD domain-containing protein 1 (BSDC1) from Gallus gallus (Chicken).